Consider the following 116-residue polypeptide: Photosystem II assembly factor Psb28 protein (116 aa).

It belongs to the Psb28 family. As to quaternary structure, part of a photosystem II (PSII) assembly intermediate complex PSII-I; crystallized from a strain deleted of psbJ, it forms monomeric PSII before addition of the oxygen evolving complex. PSII-I includes 3 assembly factors not found in mature PSII (Psb27, Psb28 and Psb34). This protein binds to the cytoplasmic face of D1 and D2 (psbA and psbD), contacting CP47 (psbB) directly above the quinone b-binding site.

It is found in the cellular thylakoid membrane. Functionally, a photosystem II (PSII) assembly factor that binds PSII during biogenesis, protecting the complex until water splitting is activated. The protein is Photosystem II assembly factor Psb28 protein of Thermosynechococcus vestitus (strain NIES-2133 / IAM M-273 / BP-1).